The primary structure comprises 3164 residues: ORFB polyprotein (3164 aa).

The Peptidase C8 domain occupies 271–418 (MARAIGLSHA…IWNDPNILVG (148 aa)). Catalysis depends on for papain-like protease p48 activity residues Cys-341 and His-388. The next 6 helical transmembrane spans lie at 684-704 (LGFL…LLPF), 791-811 (IMIA…YVPY), 823-843 (YMLL…GYAC), 1166-1186 (AGLF…AAIM), 1215-1235 (FPIF…VSAY), and 1356-1376 (ALGF…LRPP). Residues 1419-1445 (IEEKPSDAGRSEPIPDNDKQEESDYDQ) form a disordered region. The RNA-directed RNA polymerase stretch occupies residues 1792–2207 (FYKSRKALKQ…AEDSADYRTW (416 aa)). 3 helical membrane passes run 2494 to 2514 (VRIY…MHWV), 2516 to 2536 (LFVQ…WSFW), and 2589 to 2609 (LGLV…EVLF). A Helicase ATP-binding domain is found at 2650-2795 (ATKAIEHGHV…IPFLEPTLPK (146 aa)). ATP is bound at residue 2663 to 2670 (AKTASGKS). The short motif at 2750–2753 (DEFH) is the DEFH box element.

In the C-terminal section; belongs to the DEAD box helicase family. In terms of processing, papain-like protease p48 is autocatalytically processed. The putative RNA-directed RNA polymerase/helicase is probably further processed.

Its subcellular location is the host membrane. The catalysed reaction is RNA(n) + a ribonucleoside 5'-triphosphate = RNA(n+1) + diphosphate. It catalyses the reaction ATP + H2O = ADP + phosphate + H(+). Functionally, papain-like protease p48 is a cysteine protease of the peptidase family C8. In Cryphonectria parasitica (Chestnut blight fungus), this protein is ORFB polyprotein.